A 65-amino-acid chain; its full sequence is Large ribosomal subunit protein bL35 (65 aa).

The segment at 1 to 22 (MPKIKTVRGAAKRFKKTGKGGF) is disordered. The segment covering 10–22 (AAKRFKKTGKGGF) has biased composition (basic residues).

The protein belongs to the bacterial ribosomal protein bL35 family.

The chain is Large ribosomal subunit protein bL35 from Klebsiella pneumoniae (strain 342).